We begin with the raw amino-acid sequence, 77 residues long: Cell division topological specificity factor (77 aa).

It belongs to the MinE family.

Its function is as follows. Prevents the cell division inhibition by proteins MinC and MinD at internal division sites while permitting inhibition at polar sites. This ensures cell division at the proper site by restricting the formation of a division septum at the midpoint of the long axis of the cell. This Helicobacter pylori (strain Shi470) protein is Cell division topological specificity factor.